We begin with the raw amino-acid sequence, 86 residues long: Small ribosomal subunit protein uS17 (86 aa).

Belongs to the universal ribosomal protein uS17 family. In terms of assembly, part of the 30S ribosomal subunit.

Its function is as follows. One of the primary rRNA binding proteins, it binds specifically to the 5'-end of 16S ribosomal RNA. This Shouchella clausii (strain KSM-K16) (Alkalihalobacillus clausii) protein is Small ribosomal subunit protein uS17.